Consider the following 463-residue polypeptide: Mitochondrial dynamics protein MIEF1 (463 aa).

Residues 1–23 (MAGAGERKGKKDDNGIGTAIDFV) lie on the Mitochondrial intermembrane side of the membrane. A helical transmembrane segment spans residues 24 to 46 (LSNARLVLGVGGAAMLGIATLAV). Over 47–463 (KRMYDRAISA…LSEPEVLLQT (417 aa)) the chain is Cytoplasmic. The dimerization stretch occupies residues 49–195 (MYDRAISAPT…LSGSLYDDLQ (147 aa)). Ser55, Ser59, Ser79, and Ser94 each carry phosphoserine. The segment at 57–77 (PTSPTRLSHSGKRSWEEPNWM) is disordered. The tract at residues 96-123 (QTLPTDSSTFDTDTFCPPRPKPVARKGQ) is disordered. The span at 100–110 (TDSSTFDTDTF) shows a compositional bias: low complexity. The segment at 160-169 (AAVDICAELR) is important for interaction with DNM1L. Residues Ser187, Ser189, and His201 each coordinate ADP. The interval 234–242 (RRENPEYFP) is important for interaction with DNM1L. ADP-binding residues include Ser340, Arg342, and Lys368.

It belongs to the SMCR7 family. In terms of assembly, homodimer. Interacts with DNM1L. In terms of tissue distribution, expression is relatively high in heart, skeletal muscle, pancreas and kidney.

It localises to the mitochondrion outer membrane. In terms of biological role, mitochondrial outer membrane protein which regulates mitochondrial fission/fusion dynamics. Promotes the recruitment and association of the fission mediator dynamin-related protein 1 (DNM1L) to the mitochondrial surface independently of the mitochondrial fission FIS1 and MFF proteins. Regulates DNM1L GTPase activity and DNM1L oligomerization. Binds ADP and can also bind GDP, although with lower affinity. Does not bind CDP, UDP, ATP, AMP or GTP. Inhibits DNM1L GTPase activity in the absence of bound ADP. Requires ADP to stimulate DNM1L GTPase activity and the assembly of DNM1L into long, oligomeric tubules with a spiral pattern, as opposed to the ring-like DNM1L oligomers observed in the absence of bound ADP. Does not require ADP for its function in recruiting DNM1L. The sequence is that of Mitochondrial dynamics protein MIEF1 from Homo sapiens (Human).